The sequence spans 297 residues: Probable endonuclease 4 (297 aa).

The Zn(2+) site is built by His-69, His-110, Glu-145, Asp-179, His-182, His-214, Asp-227, His-229, and Glu-259.

This sequence belongs to the AP endonuclease 2 family. The cofactor is Zn(2+).

It catalyses the reaction Endonucleolytic cleavage to 5'-phosphooligonucleotide end-products.. Endonuclease IV plays a role in DNA repair. It cleaves phosphodiester bonds at apurinic or apyrimidinic (AP) sites, generating a 3'-hydroxyl group and a 5'-terminal sugar phosphate. This Listeria monocytogenes serotype 4b (strain CLIP80459) protein is Probable endonuclease 4.